The primary structure comprises 245 residues: tRNA (guanine-N(1)-)-methyltransferase (245 aa).

Glycine 114 lines the S-adenosyl-L-methionine pocket.

Belongs to the RNA methyltransferase TrmD family. As to quaternary structure, homodimer.

It localises to the cytoplasm. It catalyses the reaction guanosine(37) in tRNA + S-adenosyl-L-methionine = N(1)-methylguanosine(37) in tRNA + S-adenosyl-L-homocysteine + H(+). In terms of biological role, specifically methylates guanosine-37 in various tRNAs. The protein is tRNA (guanine-N(1)-)-methyltransferase of Sphingopyxis alaskensis (strain DSM 13593 / LMG 18877 / RB2256) (Sphingomonas alaskensis).